The primary structure comprises 289 residues: Mitochondrial fission regulator 1-like (289 aa).

T27 is subject to Phosphothreonine. Phosphoserine is present on residues S38, S100, S107, S221, S222, S235, S258, and S270.

Belongs to the MTFR1 family. In terms of processing, phosphorylated by AMPK. Upon stress, phosphorylation by AMPK is sufficient to induce mitochondrial fragmentation.

The protein resides in the mitochondrion outer membrane. Mitochondrial protein required for adaptation of miochondrial dynamics to metabolic changes. Regulates mitochondrial morphology at steady state and mediates AMPK-dependent stress-induced mitochondrial fragmentation via the control of OPA1 levels. The chain is Mitochondrial fission regulator 1-like (Mtfr1l) from Rattus norvegicus (Rat).